A 452-amino-acid polypeptide reads, in one-letter code: Phosphoglucosamine mutase (452 aa).

Ser97 acts as the Phosphoserine intermediate in catalysis. Mg(2+)-binding residues include Ser97, Asp236, Asp238, and Asp240. Ser97 is subject to Phosphoserine.

The protein belongs to the phosphohexose mutase family. Mg(2+) serves as cofactor. Post-translationally, activated by phosphorylation.

The catalysed reaction is alpha-D-glucosamine 1-phosphate = D-glucosamine 6-phosphate. Catalyzes the conversion of glucosamine-6-phosphate to glucosamine-1-phosphate. This is Phosphoglucosamine mutase from Prochlorococcus marinus (strain MIT 9515).